The sequence spans 476 residues: Tubulointerstitial nephritis antigen (476 aa).

Asparagine 38 is a glycosylation site (N-linked (GlcNAc...) asparagine). Residues 59-107 (NFGCCEDRDDGCVTEFYAANALCYCDKFCDRENSDCCPDYKSFCREEKE) form the SMB domain. 6 disulfides stabilise this stretch: cysteine 63–cysteine 70, cysteine 70–cysteine 102, cysteine 81–cysteine 83, cysteine 81–cysteine 95, cysteine 87–cysteine 94, and cysteine 95–cysteine 102. N-linked (GlcNAc...) asparagine glycans are attached at residues asparagine 175, asparagine 314, asparagine 360, and asparagine 455.

It belongs to the peptidase C1 family. It has been suggested that the active SMB domain may be permitted considerable disulfide bond heterogeneity or variability, thus 2 alternate disulfide patterns based on 3D structures are described with 1 disulfide bond conserved in both. As to expression, expressed in the kidney cortex, small intestine and cornea.

The protein localises to the secreted. It localises to the extracellular space. It is found in the extracellular matrix. Its subcellular location is the basement membrane. Functionally, mediates adhesion of proximal tubule epithelial cells via integrins alpha3-beta1 and alphaV-beta3. This is a non catalytic peptidase C1 family protein. The chain is Tubulointerstitial nephritis antigen (TINAG) from Homo sapiens (Human).